The following is a 254-amino-acid chain: Urease accessory protein UreF (254 aa).

The span at 1-11 shows a compositional bias: basic and acidic residues; the sequence is MDKGKSVKSTE. The segment at 1-25 is disordered; the sequence is MDKGKSVKSTEKSVGIPPKTPKTDN.

Belongs to the UreF family. As to quaternary structure, ureH, UreF and UreG form a complex that acts as a GTP-hydrolysis-dependent molecular chaperone, activating the urease apoprotein by helping to assemble the nickel containing metallocenter of UreC. The UreE protein probably delivers the nickel.

The protein localises to the cytoplasm. In terms of biological role, required for maturation of urease via the functional incorporation of the urease nickel metallocenter. This Helicobacter pylori (strain P12) protein is Urease accessory protein UreF.